The primary structure comprises 591 residues: Aspartate--tRNA(Asp/Asn) ligase (591 aa).

Glu-176 lines the L-aspartate pocket. The aspartate stretch occupies residues 200–203 (QLFK). Arg-222 provides a ligand contact to L-aspartate. ATP is bound by residues 222–224 (RDE) and Gln-231. Residue His-450 participates in L-aspartate binding. Glu-484 provides a ligand contact to ATP. Arg-491 is an L-aspartate binding site. 536–539 (GLDR) contributes to the ATP binding site.

This sequence belongs to the class-II aminoacyl-tRNA synthetase family. Type 1 subfamily. Homodimer.

The protein localises to the cytoplasm. The enzyme catalyses tRNA(Asx) + L-aspartate + ATP = L-aspartyl-tRNA(Asx) + AMP + diphosphate. Its function is as follows. Aspartyl-tRNA synthetase with relaxed tRNA specificity since it is able to aspartylate not only its cognate tRNA(Asp) but also tRNA(Asn). Reaction proceeds in two steps: L-aspartate is first activated by ATP to form Asp-AMP and then transferred to the acceptor end of tRNA(Asp/Asn). The protein is Aspartate--tRNA(Asp/Asn) ligase of Bacillus cereus (strain G9842).